Reading from the N-terminus, the 299-residue chain is Fibrinogen silencer-binding protein (299 aa).

K94 is covalently cross-linked (Glycyl lysine isopeptide (Lys-Gly) (interchain with G-Cter in SUMO2)).

In terms of assembly, interacts with APBA1 (via PDZ 1 and 2 domains). Expressed in multiple tissues including brain.

It is found in the nucleus. Functionally, transcriptional repressor that down-regulates the expression of the fibrinogen gamma chain. Represses transcription of GSK3B gene promoter via its interaction with APBA1. This chain is Fibrinogen silencer-binding protein (FSBP), found in Homo sapiens (Human).